Reading from the N-terminus, the 302-residue chain is Probable 2-(5''-triphosphoribosyl)-3'-dephosphocoenzyme-A synthase (302 aa).

The protein belongs to the CitG/MdcB family.

The enzyme catalyses 3'-dephospho-CoA + ATP = 2'-(5''-triphospho-alpha-D-ribosyl)-3'-dephospho-CoA + adenine. This Salmonella gallinarum (strain 287/91 / NCTC 13346) protein is Probable 2-(5''-triphosphoribosyl)-3'-dephosphocoenzyme-A synthase.